A 552-amino-acid polypeptide reads, in one-letter code: Protoheme IX farnesyltransferase, mitochondrial (552 aa).

The tract at residues 118–185 is disordered; sequence AADIPPSTST…PSGEIPPDAS (68 aa). The span at 150 to 168 shows a compositional bias: low complexity; sequence EQAASASSNAPSEAAQTTP. 8 helical membrane passes run 215–235, 245–267, 296–316, 318–338, 346–366, 387–407, 441–461, and 487–507; these read LTML…VPDF, LSPL…ANAL, AAVC…QFGV, PTVA…YTPL, TWVG…AAAG, AGGW…FMAL, VFVP…SFAV, and ARGL…LALL.

It belongs to the UbiA prenyltransferase family.

The protein localises to the mitochondrion membrane. It carries out the reaction heme b + (2E,6E)-farnesyl diphosphate + H2O = Fe(II)-heme o + diphosphate. Converts protoheme IX and farnesyl diphosphate to heme O. This is Protoheme IX farnesyltransferase, mitochondrial (COX10) from Pyricularia oryzae (strain 70-15 / ATCC MYA-4617 / FGSC 8958) (Rice blast fungus).